Here is a 207-residue protein sequence, read N- to C-terminus: 2,3-bisphosphoglycerate-dependent phosphoglycerate mutase (207 aa).

Substrate is bound by residues 10–17 (RHGQSEWN), 23–24 (TG), Arg62, 89–92 (ERDY), Lys100, 116–117 (RR), and 160–161 (GN). His11 (tele-phosphohistidine intermediate) is an active-site residue. Catalysis depends on Glu89, which acts as the Proton donor/acceptor.

Belongs to the phosphoglycerate mutase family. BPG-dependent PGAM subfamily. As to quaternary structure, homodimer.

It catalyses the reaction (2R)-2-phosphoglycerate = (2R)-3-phosphoglycerate. It participates in carbohydrate degradation; glycolysis; pyruvate from D-glyceraldehyde 3-phosphate: step 3/5. In terms of biological role, catalyzes the interconversion of 2-phosphoglycerate and 3-phosphoglycerate. In Xanthobacter autotrophicus (strain ATCC BAA-1158 / Py2), this protein is 2,3-bisphosphoglycerate-dependent phosphoglycerate mutase.